A 426-amino-acid chain; its full sequence is Serine--tRNA ligase (426 aa).

233-235 is a binding site for L-serine; it reads TAE. An ATP-binding site is contributed by 264-266; it reads RSE. Glu-287 provides a ligand contact to L-serine. An ATP-binding site is contributed by 351–354; sequence EISS. An L-serine-binding site is contributed by Ser-387.

This sequence belongs to the class-II aminoacyl-tRNA synthetase family. Type-1 seryl-tRNA synthetase subfamily. In terms of assembly, homodimer. The tRNA molecule binds across the dimer.

The protein localises to the cytoplasm. The enzyme catalyses tRNA(Ser) + L-serine + ATP = L-seryl-tRNA(Ser) + AMP + diphosphate + H(+). It carries out the reaction tRNA(Sec) + L-serine + ATP = L-seryl-tRNA(Sec) + AMP + diphosphate + H(+). The protein operates within aminoacyl-tRNA biosynthesis; selenocysteinyl-tRNA(Sec) biosynthesis; L-seryl-tRNA(Sec) from L-serine and tRNA(Sec): step 1/1. Its function is as follows. Catalyzes the attachment of serine to tRNA(Ser). Is also able to aminoacylate tRNA(Sec) with serine, to form the misacylated tRNA L-seryl-tRNA(Sec), which will be further converted into selenocysteinyl-tRNA(Sec). The protein is Serine--tRNA ligase of Pseudomonas putida (strain ATCC 47054 / DSM 6125 / CFBP 8728 / NCIMB 11950 / KT2440).